The primary structure comprises 188 residues: Ribosome-recycling factor (188 aa).

Belongs to the RRF family.

The protein localises to the cytoplasm. Responsible for the release of ribosomes from messenger RNA at the termination of protein biosynthesis. May increase the efficiency of translation by recycling ribosomes from one round of translation to another. This Akkermansia muciniphila (strain ATCC BAA-835 / DSM 22959 / JCM 33894 / BCRC 81048 / CCUG 64013 / CIP 107961 / Muc) protein is Ribosome-recycling factor.